We begin with the raw amino-acid sequence, 183 residues long: A-type ATP synthase subunit E (183 aa).

The protein belongs to the V-ATPase E subunit family. In terms of assembly, has multiple subunits with at least A(3), B(3), C, D, E, F, H, I and proteolipid K(x).

Its subcellular location is the cell membrane. Its function is as follows. Component of the A-type ATP synthase that produces ATP from ADP in the presence of a proton gradient across the membrane. This Methanococcoides burtonii (strain DSM 6242 / NBRC 107633 / OCM 468 / ACE-M) protein is A-type ATP synthase subunit E.